A 245-amino-acid chain; its full sequence is tRNA (guanine-N(1)-)-methyltransferase (245 aa).

S-adenosyl-L-methionine is bound by residues Gly113 and 133-138 (IGDYVL).

Belongs to the RNA methyltransferase TrmD family. As to quaternary structure, homodimer.

The protein resides in the cytoplasm. It catalyses the reaction guanosine(37) in tRNA + S-adenosyl-L-methionine = N(1)-methylguanosine(37) in tRNA + S-adenosyl-L-homocysteine + H(+). Its function is as follows. Specifically methylates guanosine-37 in various tRNAs. This chain is tRNA (guanine-N(1)-)-methyltransferase, found in Anoxybacillus flavithermus (strain DSM 21510 / WK1).